The chain runs to 272 residues: Sugar-phosphatase AraL (272 aa).

This sequence belongs to the HAD-like hydrolase superfamily. Mg(2+) is required as a cofactor.

The enzyme catalyses sugar phosphate + H2O = sugar + phosphate.. It carries out the reaction O-phospho-L-serine + H2O = L-serine + phosphate. The catalysed reaction is O-phospho-D-serine + H2O = D-serine + phosphate. Catalyzes the dephosphorylation of C5 and C6 carbon sugars in vitro. Catalyzes the dephosphorylation of 3'-AMP and phosphoserine in vitro. This Bacillus subtilis (strain 168) protein is Sugar-phosphatase AraL (araL).